Here is a 233-residue protein sequence, read N- to C-terminus: Phosphatidylserine decarboxylase proenzyme (233 aa).

Ser-190 acts as the Schiff-base intermediate with substrate; via pyruvic acid in catalysis. Ser-190 is subject to Pyruvic acid (Ser); by autocatalysis.

The protein belongs to the phosphatidylserine decarboxylase family. PSD-A subfamily. Heterodimer of a large membrane-associated beta subunit and a small pyruvoyl-containing alpha subunit. Requires pyruvate as cofactor. In terms of processing, is synthesized initially as an inactive proenzyme. Formation of the active enzyme involves a self-maturation process in which the active site pyruvoyl group is generated from an internal serine residue via an autocatalytic post-translational modification. Two non-identical subunits are generated from the proenzyme in this reaction, and the pyruvate is formed at the N-terminus of the alpha chain, which is derived from the carboxyl end of the proenzyme. The post-translation cleavage follows an unusual pathway, termed non-hydrolytic serinolysis, in which the side chain hydroxyl group of the serine supplies its oxygen atom to form the C-terminus of the beta chain, while the remainder of the serine residue undergoes an oxidative deamination to produce ammonia and the pyruvoyl prosthetic group on the alpha chain.

The protein resides in the cell membrane. The catalysed reaction is a 1,2-diacyl-sn-glycero-3-phospho-L-serine + H(+) = a 1,2-diacyl-sn-glycero-3-phosphoethanolamine + CO2. It participates in phospholipid metabolism; phosphatidylethanolamine biosynthesis; phosphatidylethanolamine from CDP-diacylglycerol: step 2/2. Functionally, catalyzes the formation of phosphatidylethanolamine (PtdEtn) from phosphatidylserine (PtdSer). This chain is Phosphatidylserine decarboxylase proenzyme, found in Bartonella quintana (strain Toulouse) (Rochalimaea quintana).